The primary structure comprises 83 residues: Small ribosomal subunit protein uS17 (83 aa).

It belongs to the universal ribosomal protein uS17 family. As to quaternary structure, part of the 30S ribosomal subunit.

Functionally, one of the primary rRNA binding proteins, it binds specifically to the 5'-end of 16S ribosomal RNA. The protein is Small ribosomal subunit protein uS17 of Campylobacter hominis (strain ATCC BAA-381 / DSM 21671 / CCUG 45161 / LMG 19568 / NCTC 13146 / CH001A).